Here is a 161-residue protein sequence, read N- to C-terminus: Ferric uptake regulation protein 1 (161 aa).

C94 and C97 together coordinate Zn(2+).

Belongs to the Fur family.

Its subcellular location is the cytoplasm. In terms of biological role, acts as a global negative controlling element, employing Fe(2+) as a cofactor to bind the operator of the repressed genes. This chain is Ferric uptake regulation protein 1 (fur1), found in Mycolicibacterium fortuitum (Mycobacterium fortuitum).